Reading from the N-terminus, the 487-residue chain is Probable cytochrome P450 516A1 (487 aa).

Residues 1-21 (MIILLLSIIIFILYIVKIFKN) form a helical membrane-spanning segment. Cys-434 lines the heme pocket.

Belongs to the cytochrome P450 family. Heme serves as cofactor.

The protein localises to the membrane. The sequence is that of Probable cytochrome P450 516A1 (cyp516A1) from Dictyostelium discoideum (Social amoeba).